The chain runs to 537 residues: Arginine--tRNA ligase (537 aa).

Residues alanine 113–histidine 123 carry the 'HIGH' region motif.

This sequence belongs to the class-I aminoacyl-tRNA synthetase family. Monomer.

It localises to the cytoplasm. The catalysed reaction is tRNA(Arg) + L-arginine + ATP = L-arginyl-tRNA(Arg) + AMP + diphosphate. In Mycoplasma pneumoniae (strain ATCC 29342 / M129 / Subtype 1) (Mycoplasmoides pneumoniae), this protein is Arginine--tRNA ligase (argS).